A 203-amino-acid chain; its full sequence is MTPLYLASGSPRRRELLTQIGVPFIVISAPVDESPLPSESAPAYVERLARAKAAAGLVSVDGPAVVLGADTAVVLDGRILGKPENREDALAMLADLSGREHQVLTAVALDDGQRVHSFCVTSTVRFRAISTDEAQRYWASGEPSDKAGGYAIQGLGAVFVSGLSGSYSAVVGLPLCETADLLGQFGIACWQSLAHTPEVTNPQ.

D70 serves as the catalytic Proton acceptor.

This sequence belongs to the Maf family. YhdE subfamily. The cofactor is a divalent metal cation.

Its subcellular location is the cytoplasm. The catalysed reaction is dTTP + H2O = dTMP + diphosphate + H(+). It carries out the reaction UTP + H2O = UMP + diphosphate + H(+). Functionally, nucleoside triphosphate pyrophosphatase that hydrolyzes dTTP and UTP. May have a dual role in cell division arrest and in preventing the incorporation of modified nucleotides into cellular nucleic acids. The chain is dTTP/UTP pyrophosphatase (maf-1) from Pseudomonas putida (strain ATCC 47054 / DSM 6125 / CFBP 8728 / NCIMB 11950 / KT2440).